The chain runs to 271 residues: MSVHKSIKRITASEIQAKKKQEPIVSLTAYQAYSARIADPHCDFLLVGDSVGMIVHGFDTTLPVDVDMMILHGKAVMRGSQRALVVVDMPFGSYEKSPEQAFSNASRILADTGCGAVKLEGGIHMAKTIDFLCKRGIPVMSHIGLTPQAVNHFGGFKTQGRDKSDWEKIEADAAAIEDAGAFAVVVEAVVEPLAVKLTEKLSIPTIGIGASNQCDGQILVMEDMLGYGAWAPKFVRRYGTLEQAMDTAIRNYAEDVKSRAFPSDSEIYKLK.

Mg(2+) is bound by residues D49 and D88. 3-methyl-2-oxobutanoate-binding positions include 49–50, D88, and K118; that span reads DS. Residue E120 participates in Mg(2+) binding. The active-site Proton acceptor is the E187.

Belongs to the PanB family. As to quaternary structure, homodecamer; pentamer of dimers. Mg(2+) is required as a cofactor.

The protein localises to the cytoplasm. It catalyses the reaction 3-methyl-2-oxobutanoate + (6R)-5,10-methylene-5,6,7,8-tetrahydrofolate + H2O = 2-dehydropantoate + (6S)-5,6,7,8-tetrahydrofolate. It participates in cofactor biosynthesis; (R)-pantothenate biosynthesis; (R)-pantoate from 3-methyl-2-oxobutanoate: step 1/2. In terms of biological role, catalyzes the reversible reaction in which hydroxymethyl group from 5,10-methylenetetrahydrofolate is transferred onto alpha-ketoisovalerate to form ketopantoate. This chain is 3-methyl-2-oxobutanoate hydroxymethyltransferase, found in Bartonella bacilliformis (strain ATCC 35685 / KC583 / Herrer 020/F12,63).